The primary structure comprises 60 residues: Large ribosomal subunit protein uL30 (60 aa).

Belongs to the universal ribosomal protein uL30 family. As to quaternary structure, part of the 50S ribosomal subunit.

The sequence is that of Large ribosomal subunit protein uL30 from Christiangramia forsetii (strain DSM 17595 / CGMCC 1.15422 / KT0803) (Gramella forsetii).